The chain runs to 264 residues: Proteasome assembly chaperone 2 (264 aa).

Phosphothreonine is present on T137.

The protein belongs to the PSMG2 family. As to quaternary structure, forms a heterodimer with PSMG1. The PSMG1-PSMG2 heterodimer interacts directly with the PSMA5 and PSMA7 proteasome alpha subunits. In terms of processing, degraded by the proteasome upon completion of 20S proteasome maturation.

The protein localises to the nucleus. Functionally, chaperone protein which promotes assembly of the 20S proteasome as part of a heterodimer with PSMG1. The PSMG1-PSMG2 heterodimer binds to the PSMA5 and PSMA7 proteasome subunits, promotes assembly of the proteasome alpha subunits into the heteroheptameric alpha ring and prevents alpha ring dimerization. This is Proteasome assembly chaperone 2 from Bos taurus (Bovine).